Reading from the N-terminus, the 355-residue chain is Serum paraoxonase/arylesterase 1 (355 aa).

The cysteines at positions 42 and 353 are disulfide-linked. Glu-53 and Asp-54 together coordinate Ca(2+). Residue His-115 is the Proton acceptor of the active site. Ca(2+)-binding residues include Ile-117, Asn-168, Asp-169, and Asn-224. Asn-253 carries N-linked (GlcNAc...) asparagine glycosylation. Residues Asp-269 and Asn-270 each coordinate Ca(2+). Asn-270 and Asn-324 each carry an N-linked (GlcNAc...) asparagine glycan.

The protein belongs to the paraoxonase family. Homodimer. Heterooligomer with phosphate-binding protein (HPBP). Interacts with CLU. Ca(2+) is required as a cofactor. Post-translationally, glycosylated. In terms of processing, the signal sequence is not cleaved. Present in two forms, form B contains a disulfide bond, form A does not. Plasma, associated with HDL (at protein level). Expressed in liver, but not in heart, brain, placenta, lung, skeletal muscle, kidney or pancreas.

The protein resides in the secreted. It is found in the extracellular space. It carries out the reaction a phenyl acetate + H2O = a phenol + acetate + H(+). The catalysed reaction is An aryl dialkyl phosphate + H2O = dialkyl phosphate + an aryl alcohol.. It catalyses the reaction an N-acyl-L-homoserine lactone + H2O = an N-acyl-L-homoserine + H(+). Functionally, hydrolyzes the toxic metabolites of a variety of organophosphorus insecticides. Capable of hydrolyzing a broad spectrum of organophosphate substrates and lactones, and a number of aromatic carboxylic acid esters. Mediates an enzymatic protection of low density lipoproteins against oxidative modification and the consequent series of events leading to atheroma formation. In Homo sapiens (Human), this protein is Serum paraoxonase/arylesterase 1 (PON1).